The primary structure comprises 210 residues: Thymidylate kinase (210 aa).

14-21 (GLDRSGKS) contacts ATP.

The protein belongs to the thymidylate kinase family.

It carries out the reaction dTMP + ATP = dTDP + ADP. It functions in the pathway pyrimidine metabolism; dTTP biosynthesis. In terms of biological role, catalyzes the conversion of dTMP to dTDP. This is Thymidylate kinase (tmp1) from Schizosaccharomyces pombe (strain 972 / ATCC 24843) (Fission yeast).